The chain runs to 93 residues: DNA-binding protein HU 1 (93 aa).

This sequence belongs to the bacterial histone-like protein family. As to quaternary structure, homodimer.

The protein resides in the cytoplasm. Its subcellular location is the nucleoid. Histone-like DNA-binding protein which is capable of wrapping DNA to stabilize it, and thus to prevent its denaturation under extreme environmental conditions. This is DNA-binding protein HU 1 (hup1) from Streptomyces coelicolor (strain ATCC BAA-471 / A3(2) / M145).